The sequence spans 119 residues: Beta-2-microglobulin (119 aa).

The N-terminal stretch at 1–20 (MARFVVVPLFVLLSLFGLEA) is a signal peptide. Residues 25–114 (PKIQVYSRYP…VTFSTPKTVK (90 aa)) form the Ig-like C1-type domain. Cys45 and Cys100 are oxidised to a cystine.

This sequence belongs to the beta-2-microglobulin family. Heterodimer of an alpha chain and a beta chain. Beta-2-microglobulin is the beta-chain of major histocompatibility complex class I molecules.

Its subcellular location is the secreted. In terms of biological role, component of the class I major histocompatibility complex (MHC). Involved in the presentation of peptide antigens to the immune system. This Saguinus niger (Black tamarin) protein is Beta-2-microglobulin (B2M).